The chain runs to 120 residues: Large ribosomal subunit protein bL19c (120 aa).

This sequence belongs to the bacterial ribosomal protein bL19 family.

Its subcellular location is the plastid. It localises to the chloroplast. The protein is Large ribosomal subunit protein bL19c of Thalassiosira pseudonana (Marine diatom).